A 419-amino-acid polypeptide reads, in one-letter code: Tyrosine--tRNA ligase (419 aa).

Y42 contacts L-tyrosine. A 'HIGH' region motif is present at residues 47-56 (CTAPSLHVGS). Residues Y179 and Q183 each contribute to the L-tyrosine site. The short motif at 239–243 (KMGKT) is the 'KMSKS' region element. Position 242 (K242) interacts with ATP. The S4 RNA-binding domain maps to 353–419 (LGVLAAFVKA…RKRHVLLKLV (67 aa)).

This sequence belongs to the class-I aminoacyl-tRNA synthetase family. TyrS type 1 subfamily. Homodimer.

The protein resides in the cytoplasm. It catalyses the reaction tRNA(Tyr) + L-tyrosine + ATP = L-tyrosyl-tRNA(Tyr) + AMP + diphosphate + H(+). Functionally, catalyzes the attachment of tyrosine to tRNA(Tyr) in a two-step reaction: tyrosine is first activated by ATP to form Tyr-AMP and then transferred to the acceptor end of tRNA(Tyr). The sequence is that of Tyrosine--tRNA ligase from Methylocella silvestris (strain DSM 15510 / CIP 108128 / LMG 27833 / NCIMB 13906 / BL2).